Consider the following 855-residue polypeptide: Transcription factor gaf1 (855 aa).

Residues 72–112 (KNLTPNGDSNTLTPDTFSDPTAPSSAQSVPPTSSAETTADN) show a composition bias toward polar residues. Disordered stretches follow at residues 72-126 (KNLT…PAYS), 149-184 (TSFD…ESQP), 229-287 (SHNL…GFPS), 412-483 (PNSN…DMFS), 602-643 (NKNA…TRTT), and 680-768 (KKRN…SQSM). Residues 149–168 (TSFDESTAKSKKRSIADSHF) show a composition bias toward basic and acidic residues. Ser-150 is modified (phosphoserine). Low complexity-rich tracts occupy residues 240-250 (PANSNNSASPN) and 428-444 (NSSK…DSNQ). Polar residues predominate over residues 445-476 (ENAESFNPSISSHNSAEWASGETTGHSSNSPL). The segment covering 614–623 (AEDKKGDANT) has biased composition (basic and acidic residues). Low complexity-rich tracts occupy residues 625-643 (RANA…TRTT) and 707-717 (SKSSSAKSTAA). The segment at 635 to 659 (CTNCQTRTTPLWRRSPDGQPLCNAC) adopts a GATA-type zinc-finger fold. Ser-727 and Ser-729 each carry phosphoserine. Residues 755-767 (QQQSSENESKSQS) show a composition bias toward low complexity.

Its subcellular location is the nucleus. Functionally, transcriptional activator. The chain is Transcription factor gaf1 (gaf1) from Schizosaccharomyces pombe (strain 972 / ATCC 24843) (Fission yeast).